The primary structure comprises 279 residues: Tryptophan synthase alpha chain (279 aa).

Residues glutamate 50 and aspartate 61 each act as proton acceptor in the active site.

It belongs to the TrpA family. Tetramer of two alpha and two beta chains.

It carries out the reaction (1S,2R)-1-C-(indol-3-yl)glycerol 3-phosphate + L-serine = D-glyceraldehyde 3-phosphate + L-tryptophan + H2O. It participates in amino-acid biosynthesis; L-tryptophan biosynthesis; L-tryptophan from chorismate: step 5/5. Its function is as follows. The alpha subunit is responsible for the aldol cleavage of indoleglycerol phosphate to indole and glyceraldehyde 3-phosphate. This chain is Tryptophan synthase alpha chain, found in Rhizobium etli (strain ATCC 51251 / DSM 11541 / JCM 21823 / NBRC 15573 / CFN 42).